Reading from the N-terminus, the 48-residue chain is DNA gyrase inhibitor YacG (48 aa).

Zn(2+)-binding residues include C9, C12, C28, and C32.

This sequence belongs to the DNA gyrase inhibitor YacG family. In terms of assembly, interacts with GyrB. Zn(2+) is required as a cofactor.

Functionally, inhibits all the catalytic activities of DNA gyrase by preventing its interaction with DNA. Acts by binding directly to the C-terminal domain of GyrB, which probably disrupts DNA binding by the gyrase. This chain is DNA gyrase inhibitor YacG, found in Wigglesworthia glossinidia brevipalpis.